Here is a 494-residue protein sequence, read N- to C-terminus: Voltage-gated potassium channel regulatory subunit KCNF1 (494 aa).

Over 1–183 (MDGSGERSLP…KPESSCPARV (183 aa)) the chain is Cytoplasmic. Residues 184-204 (VAVLSFLLILVSSVVMCMGTI) traverse the membrane as a helical segment. A helical transmembrane segment spans residues 224–244 (NVETACIGWFTLEYLLRLFSS). The Cytoplasmic portion of the chain corresponds to 245–249 (PNKLH). A helical membrane pass occupies residues 250–270 (FALSFMNIVDVLAILPFYVSL). The chain crosses the membrane as a helical; Voltage-sensor span at residues 290–310 (QALRIMRIARIFKLARHSSGL). Residues 311–324 (QTLTYALKRSFKEL) are Cytoplasmic-facing. A helical membrane pass occupies residues 325-345 (GLLLMYLAVGIFVFSALGYTM). An intramembrane region (pore-forming) is located at residues 358–378 (PQSFWWAIITMTTVGYGDIYP). A Selectivity filter motif is present at residues 370–375 (TVGYGD). Residues 386 to 406 (NAAISFLCGVIAIALPIHPII) form a helical membrane-spanning segment. The Cytoplasmic segment spans residues 407 to 494 (NNFVRYYNKQ…HHRTRLQSCK (88 aa)). A disordered region spans residues 433–469 (NSSSGGEGKTGGSRSDLDNLPPEPAGKEAPSCSSRLK).

It belongs to the potassium channel family. F (TC 1.A.1.2) subfamily. Kv5.1/KCNF1 sub-subfamily. In terms of assembly, heterotetramer with KCNB1 or KCNB2. Detected in heart, brain, liver, skeletal muscle, kidney and pancreas.

Its subcellular location is the cell membrane. In terms of biological role, regulatory alpha-subunit of the voltage-gated potassium (Kv) channel which, when coassembled with KCNB1 or KCNB2, can modulate their expression and their gating kinetics by acting on deactivation upon repolarization and inactivation during maintained depolarization. Accelerates inactivation but has relatively little effect on deactivation. Coexpression with KCNB1 or KCNB2 markedly slows inactivation. Each modulatory subunit has its own specific properties of regulation, and can lead to extensive inhibitions, to large changes in kinetics, and/or to large shifts in the voltage dependencies of the inactivation process. The gating kinetics depends on the nature and stoichiometry of the associated regulatory sunbunit. Fails to produce a potassium current when expressed alone. In Homo sapiens (Human), this protein is Voltage-gated potassium channel regulatory subunit KCNF1.